The following is a 185-amino-acid chain: MIEIRFHGRGGQGAVTAANILAEAAFLEGKYVQAFPFFGVERRGAPVTAFTRIDDKPIRIKTQIYEPDVVVVLDPSLLDTVDVTAGLKEGGMVIVNTEKTKEEVLEKLKKKPAKLALVDATTIALEILGLPITNTSILGAVAKATGIVKIESVEEAIKDTFSGELGKKNAKAAREAFEKTVVYEL.

Heterotetramer of one alpha, one beta, one delta and one gamma chain.

The catalysed reaction is 2 oxidized [2Fe-2S]-[ferredoxin] + pyruvate + CoA = 2 reduced [2Fe-2S]-[ferredoxin] + acetyl-CoA + CO2 + H(+). The enzyme catalyses 3-methyl-2-oxobutanoate + 2 oxidized [2Fe-2S]-[ferredoxin] + CoA = 2-methylpropanoyl-CoA + 2 reduced [2Fe-2S]-[ferredoxin] + CO2 + H(+). This Thermococcus litoralis (strain ATCC 51850 / DSM 5473 / JCM 8560 / NS-C) protein is Pyruvate/ketoisovalerate oxidoreductases common subunit gamma (porG).